Here is a 114-residue protein sequence, read N- to C-terminus: Cyclin-dependent kinase 2-associated protein 1 (114 aa).

The interval 18-57 (AGSVHSPSTSMATSSQYRQLLSDYGPPSLGYTQGTGNSQV) is disordered. The interval 19 to 24 (GSVHSP) is interaction with CDK2AP2. The span at 20-36 (SVHSPSTSMATSSQYRQ) shows a compositional bias: polar residues. S45 is modified (phosphoserine; by IKKE). Over residues 47 to 57 (GYTQGTGNSQV) the composition is skewed to polar residues.

Belongs to the CDK2AP family. In terms of assembly, homodimer. Component of the nucleosome remodeling and deacetylase (NuRD) repressor complex, composed of core proteins MTA1, MTA2, MTA3, RBBP4, RBBP7, HDAC1, HDAC2, MBD2, MBD3, and peripherally associated proteins CDK2AP1, CDK2AP2, GATAD2A, GATAD2B, CHD3, CHD4 and CHD5. The exact stoichiometry of the NuRD complex is unknown, and some subunits such as MBD2 and MBD3, GATAD2A and GATAD2B, and CHD3, CHD4 and CHD5 define mutually exclusive NuRD complexes. Interacts with monomeric unphosphorylated CDK2. Interacts with CDK2AP2. Interacts with GATAD2A. Interacts with HDAC1. Interacts with HDAC2. Interacts with MBD2. Interacts with MBD3. Interacts with RBBP4. Interacts with RBBP7. Post-translationally, phosphorylated in vitro by IKBKE at Ser-45.

It localises to the nucleus. The protein resides in the chromosome. Its function is as follows. Inhibitor of cyclin-dependent kinase CDK2. Also acts as a component of the histone deacetylase NuRD complex which participates in the remodeling of chromatin. This chain is Cyclin-dependent kinase 2-associated protein 1 (Cdk2ap1), found in Mus musculus (Mouse).